We begin with the raw amino-acid sequence, 486 residues long: MFPKETTWNISFAGCGFLGVYHIGVASCLREHAPFLVANATHIYGASAGALTATALVTGACLGEAGANIIEVSKEARKRFLGPLHPSFNMVKTIRGCLLKILPADCYECASGRLGISLTRVSDGENVIITHFNSKEELIQANVCSTFIPVYCGLIPPSLQGVRYVDGGISDNLPLYELKNTITVSPFSGESDICPQDSSTNIHELRVTNTSIQFNLRNLYRLSKALFPPEPLVLREMCKQGYRDGLRFLRRNGLLNRPNPLLALPPSQPPAPEDADAQEGAVAMERTGGKDHLPPPREDHILEHLPSRLNEALLEACMEPTDLLTTLSNMLPVRLAMAMMVPYTLPLESAVSFTIRLLEWLPDVPEDIRWMKEQTGSICQYLMIRAKRKLGNHLPSRLSGQVVLRRARSLPSVPLSCAAYSEVLPSWMRNSLSLGDVLAKWEECQRQLLLGLFCTNVAFPPDALRMRVPAGPAPEPPQHPPSSPPC.

Over M1–W8 the chain is Cytoplasmic. The helical transmembrane segment at N9–L29 threads the bilayer. A PNPLA domain is found at I10 to K179. The GXGXXG motif lies at G14 to G19. Residues R30–H42 lie on the Extracellular side of the membrane. A glycan (N-linked (GlcNAc...) asparagine) is linked at N39. Residues I43–G63 form a helical membrane-spanning segment. The GXSXG signature appears at G45 to G49. The active-site Nucleophile is the S47. The Cytoplasmic segment spans residues E64–E137. K92 is covalently cross-linked (Glycyl lysine isopeptide (Lys-Gly) (interchain with G-Cter in ubiquitin)). A helical membrane pass occupies residues L138 to S158. At L159–R334 the chain is on the extracellular side. The Proton acceptor role is filled by D166. Positions D166–G168 match the DGA/G motif. Residues L335 to I355 form a helical membrane-spanning segment. Over R356–C486 the chain is Cytoplasmic. S377 is subject to Phosphoserine; in vitro. A phosphoserine; by PKA mark is found at S399 and S409. A Phosphoserine; in vitro modification is found at S433.

In terms of assembly, interacts with ABHD5; this association stimulates PNPLA2 triglyceride hydrolase activity. Interacts with SERPINF1; this interaction stimulates the phospholipase A2 activity of PNPLA2. Despite a colocalization in lipid droplets, it probably does not interact with PLIN. Interacts with PLIN5; prevents interaction with ABHD5. Interacts with FAF2. In terms of processing, phosphorylation at Ser-409 by PKA is increased during fasting and moderate intensity exercise, and moderately increases lipolytic activity. Ubiquitinated by PEX2 in response to reactive oxygen species (ROS), leading to its degradation. Ubiquitination is stimulated by LDAH.

The protein resides in the lipid droplet. The protein localises to the cell membrane. Its subcellular location is the cytoplasm. The enzyme catalyses a triacylglycerol + H2O = a diacylglycerol + a fatty acid + H(+). It carries out the reaction a triacylglycerol + H2O = a 1,2-diacylglycerol + a fatty acid + H(+). It catalyses the reaction a triacylglycerol + H2O = a 1,3-diacylglycerol + a fatty acid + H(+). The catalysed reaction is a triacyl-sn-glycerol + H2O = a 1,3-diacyl-sn-glycerol + a fatty acid + H(+). The enzyme catalyses a triacyl-sn-glycerol + H2O = a 2,3-diacyl-sn-glycerol + a fatty acid + H(+). It carries out the reaction a 1-acylglycerol + a 1,3-diacylglycerol = a triacylglycerol + glycerol. It catalyses the reaction a 1-acylglycerol + a 1,2-diacylglycerol = a triacylglycerol + glycerol. The catalysed reaction is 2 a 1-acylglycerol = a 1,2-diacylglycerol + glycerol. The enzyme catalyses a triacylglycerol + all-trans-retinol = an all-trans-retinyl ester + a diacylglycerol. It carries out the reaction 1,2-di-(9Z-octadecenoyl)-glycerol + (9Z)-octadecenoate + H(+) = 1,2,3-tri-(9Z-octadecenoyl)-glycerol + H2O. It catalyses the reaction 1,2,3-tri-(9Z-octadecenoyl)-glycerol + H2O = 1,3-di-(9Z-octadecenoyl)-glycerol + (9Z)-octadecenoate + H(+). The catalysed reaction is 1-(9Z-octadecenoyl)-glycerol + 1,3-di-(9Z-octadecenoyl)-glycerol = 1,2,3-tri-(9Z-octadecenoyl)-glycerol + glycerol. The enzyme catalyses 1-(9Z-octadecenoyl)-glycerol + 1,2-di-(9Z-octadecenoyl)-glycerol = 1,2,3-tri-(9Z-octadecenoyl)-glycerol + glycerol. It carries out the reaction 2 1-(9Z-octadecenoyl)-glycerol = 1,2-di-(9Z-octadecenoyl)-glycerol + glycerol. It catalyses the reaction 1,2,3-tri-(9Z-octadecenoyl)-glycerol + all-trans-retinol = all-trans-retinyl 9Z-octadecenoate + di-(9Z)-octadecenoylglycerol. The catalysed reaction is 1,2,3-tri-(9Z)-hexadecenoylglycerol + H2O = 1,3-di-(9Z)-hexadecenoylglycerol + (9Z)-hexadecenoate + H(+). The enzyme catalyses 1,2,3-tri-(9Z,12Z)-octadecadienoylglycerol + H2O = 1,3-di-(9Z,12Z)-octadecadienoylglycerol + (9Z,12Z)-octadecadienoate + H(+). It carries out the reaction 1,2,3-tri-(9Z,12Z,15Z)-octadecatrienoylglycerol + H2O = 1,3-di-(9Z,12Z,15Z)-octadecatrienoylglycerol + (9Z,12Z,15Z)-octadecatrienoate + H(+). It catalyses the reaction 1,3-di-(9Z)-octadecenoyl-2-hexadecanoylglycerol + H2O = 1,3-di-(9Z-octadecenoyl)-glycerol + hexadecanoate + H(+). The catalysed reaction is 1,2-di-(9Z)-octadecenoyl-3-hexadecanoyl-sn-glycerol + H2O = 1-(9Z)-octadecenoyl-3-hexadecanoyl-sn-glycerol + (9Z)-octadecenoate + H(+). The enzyme catalyses 1-hexadecanoyl-2,3-di-(9Z)-octadecenoyl-sn-glycerol + H2O = 1-hexadecanoyl-3-(9Z)-octadecenoyl-sn-glycerol + (9Z)-octadecenoate + H(+). It carries out the reaction 1,2,3-tri-(9Z-octadecenoyl)-glycerol + H2O = 2,3-di-(9Z)-octadecenoyl-sn-glycerol + (9Z)-octadecenoate + H(+). It catalyses the reaction 1,2,3-tri-(9Z)-hexadecenoylglycerol + H2O = 2,3-di-(9Z)-hexadecenoyl-sn-glycerol + (9Z)-hexadecenoate + H(+). The catalysed reaction is 1,2,3-tri-(9Z,12Z)-octadecadienoylglycerol + H2O = 2,3-di-(9Z,12Z)-octadecadienoyl-sn-glycerol + (9Z,12Z)-octadecadienoate + H(+). The enzyme catalyses 1,2,3-tri-(9Z,12Z,15Z)-octadecatrienoylglycerol + H2O = 2,3-di-(9Z,12Z,15Z)-octadecatrienoyl-sn-glycerol + (9Z,12Z,15Z)-octadecatrienoate + H(+). It carries out the reaction 1,3-di-(9Z)-octadecenoyl-2-hexadecanoylglycerol + H2O = 2-hexadecanoyl-3-(9Z)-octadecenoyl-sn-glycerol + (9Z)-octadecenoate + H(+). It catalyses the reaction 1-hexadecanoyl-2,3-di-(9Z)-octadecenoyl-sn-glycerol + H2O = 2,3-di-(9Z)-octadecenoyl-sn-glycerol + hexadecanoate + H(+). The catalysed reaction is 1,2-di-(9Z)-octadecenoyl-3-hexadecanoyl-sn-glycerol + H2O = 2-(9Z-octadecenoyl)-3-hexadecanoyl-sn-glycerol + (9Z)-octadecenoate + H(+). The enzyme catalyses a 1,2-diacyl-sn-glycero-3-phosphocholine + H2O = a 1-acyl-sn-glycero-3-phosphocholine + a fatty acid + H(+). It carries out the reaction 1,2,3-tri-(9Z-octadecenoyl)-glycerol + 9-hydroxy-octadecanoate = 9-(9Z-octadecenoyloxy)-octadecanoate + 2,3-di-(9Z)-octadecenoyl-sn-glycerol. It catalyses the reaction 1-hexadecanoyl-2,3-di-(9Z)-octadecenoyl-sn-glycerol + 9-hydroxy-octadecanoate = 9-hexadecanoyloxy-octadecanoate + 2,3-di-(9Z)-octadecenoyl-sn-glycerol. The catalysed reaction is 1,2,3-tri-(10Z)-heptadecenoylglycerol + 9-hydroxy-octadecanoate = 2,3-di-(10Z-heptadecenoyl)-sn-glycerol + 9-(10Z-heptadecenoyloxy)-octadecanoate. The enzyme catalyses 1,2,3-tri-(9Z,12Z)-octadecadienoylglycerol + 9-hydroxy-octadecanoate = 2,3-di-(9Z,12Z)-octadecadienoyl-sn-glycerol + 9-(9Z,12Z-octadecadienoyloxy)-octadecanoate. It carries out the reaction 1,2,3-tri-(9Z)-hexadecenoylglycerol + 9-hydroxy-octadecanoate = 2,3-di-(9Z)-hexadecenoyl-sn-glycerol + 9-(9Z-hexadecenoyloxy)-octadecanoate. It catalyses the reaction 9-hydroxy-octadecanoate + 1,2-di-(9Z-octadecenoyl)-sn-glycerol = 9-(9Z-octadecenoyloxy)-octadecanoate + 2-(9Z-octadecenoyl)-glycerol. The catalysed reaction is 1-hexadecanoyl-2,3-di-(9Z)-octadecenoyl-sn-glycerol + 9-hydroxy-octadecanoate = 1-hexadecanoyl-3-(9Z)-octadecenoyl-sn-glycerol + 9-(9Z-octadecenoyloxy)-octadecanoate. It participates in glycerolipid metabolism; triacylglycerol degradation. Functionally, catalyzes the initial step in triglyceride hydrolysis in adipocyte and non-adipocyte lipid droplets. Exhibits a strong preference for the hydrolysis of long-chain fatty acid esters at the sn-2 position of the glycerol backbone and acts coordinately with LIPE/HLS and DGAT2 within the lipolytic cascade. Also possesses acylglycerol transacylase and phospholipase A2 activities. Transfers fatty acid from triglyceride to retinol, hydrolyzes retinylesters, and generates 1,3-diacylglycerol from triglycerides. Regulates adiposome size and may be involved in the degradation of adiposomes. Catalyzes the formation of an ester bond between hydroxy fatty acids and fatty acids derived from triglycerides or diglycerides to generate fatty acid esters of hydroxy fatty acids (FAHFAs) in adipocytes. Acts antagonistically with LDAH in regulation of cellular lipid stores. Inhibits LDAH-stimulated lipid droplet fusion. May play an important role in energy homeostasis. May play a role in the response of the organism to starvation, enhancing hydrolysis of triglycerides and providing free fatty acids to other tissues to be oxidized in situations of energy depletion. The chain is Patatin-like phospholipase domain-containing protein 2 (PNPLA2) from Bos taurus (Bovine).